Here is a 481-residue protein sequence, read N- to C-terminus: Abietadienol/abietadienal oxidase (481 aa).

The helical transmembrane segment at 2-22 (ADQISLLLVVFTAAVALLHLI) threads the bilayer. Heme is bound at residue cysteine 430.

This sequence belongs to the cytochrome P450 family. Heme is required as a cofactor. Expressed in young tissues such as flushing buds and green bark tissues. Lower levels in mature needles and bark.

Its subcellular location is the membrane. The enzyme catalyses abieta-7,13-dien-18-ol + 2 reduced [NADPH--hemoprotein reductase] + 2 O2 = abieta-7,13-dien-18-oate + 2 oxidized [NADPH--hemoprotein reductase] + 3 H2O + 3 H(+). Multifunctional and multisubstrate cytochrome P450 that oxidizes the respective carbon 18 of abietadienol, abietadienal, levopimaradienol, isopimara-7,15-dienol, isopimara-7,15-dienal, dehydroabietadienol, and dehydroabietadienal. The chain is Abietadienol/abietadienal oxidase (CYP720B1) from Pinus taeda (Loblolly pine).